A 178-amino-acid polypeptide reads, in one-letter code: Large ribosomal subunit protein uL6 (178 aa).

This sequence belongs to the universal ribosomal protein uL6 family. As to quaternary structure, part of the 50S ribosomal subunit.

Functionally, this protein binds to the 23S rRNA, and is important in its secondary structure. It is located near the subunit interface in the base of the L7/L12 stalk, and near the tRNA binding site of the peptidyltransferase center. The polypeptide is Large ribosomal subunit protein uL6 (Streptococcus gordonii (strain Challis / ATCC 35105 / BCRC 15272 / CH1 / DL1 / V288)).